The primary structure comprises 671 residues: DNA ligase (671 aa).

Residues 32–36, 81–82, and E113 contribute to the NAD(+) site; these read DAEYD and SL. The N6-AMP-lysine intermediate role is filled by K115. Positions 136, 173, 290, and 314 each coordinate NAD(+). 4 residues coordinate Zn(2+): C408, C411, C426, and C432. The 79-residue stretch at 593-671 folds into the BRCT domain; the sequence is EIDSPFAGKT…EAEMLRLFGE (79 aa).

This sequence belongs to the NAD-dependent DNA ligase family. LigA subfamily. Mg(2+) is required as a cofactor. Requires Mn(2+) as cofactor.

It catalyses the reaction NAD(+) + (deoxyribonucleotide)n-3'-hydroxyl + 5'-phospho-(deoxyribonucleotide)m = (deoxyribonucleotide)n+m + AMP + beta-nicotinamide D-nucleotide.. Functionally, DNA ligase that catalyzes the formation of phosphodiester linkages between 5'-phosphoryl and 3'-hydroxyl groups in double-stranded DNA using NAD as a coenzyme and as the energy source for the reaction. It is essential for DNA replication and repair of damaged DNA. This is DNA ligase from Enterobacter sp. (strain 638).